Here is a 1488-residue protein sequence, read N- to C-terminus: MSNPMFPEKWEESSTSKSSRRVHKRRERKMWKKPIKLSRFPSFGFSGSDFTLDQIPAIFSGYTAESEDSSSSEMSDDSRTYSKSSDENEELDQERPRSVKRRAKSKSISRISSMKVLRRQSTRTLYGAGQRLKKMRSMKRLTSNSRQILRKKNLDRGDFGLLQPHYLRPTSSSASKNVENNQKNLGAARLKRIASLRYNGLLKATCSSAMKGSSSKRSNDVCTYRYCSLHGRRHSHAADNNAGVPSLKRFVSMRRKFMNRQKSVNRRLVLLKRTLSRKRGPLGGRVVTDQESKEVDDNVDGDSDEEVFEEEVSSSVDGGNDNESIGRSSETVMVDVDDNVDRGMDAMETVASKVQESKTETVGATLWRAICEQTVTGHDHDDGKVDGTTSDGTVGDNEEVCREGSSGELREEDGKKTEYVWNETVTLVKQAFDEILAEITDDDSSDDISMTKDEALEVGLGEEDVGADSSDSSCSDMQPVIERDTHLSVIASTFHMRDEFGHQRGPKKWSYLKRVILLKRFLKSLDRKERRKLSDGKESETIMRLRRELVGERKNAEEWMLDHALRQVISTLAPSQKKKVKHLVKAFESLIPMDGGSRGHDDLVSPAREENETVNSQTQTILRDNKDATDILEVSPAKDLEETNLTCEASSFLSIDMKSDEENETVNSPTIWRDNEDTTDLLEVVPAKDLEETNLTSESSSSLCIGMKSDEALESTADASLCNHLAVEEEVDGLALGSFIEEEEKKGESEKQNLSTWRNLIQKHMVMRDNSEGNRNETEQEHKWSYGTDQMTGIDDANAAAVKSIQLAFETILSEIPDSSSDEESVSESSNSLKEEKEHQGETKRSWNSLRKVILLKRFVKSLEKVQVPNPRKMRNLPVESAFEAENVFLRHRSIMEGTRTEGEEMMLDYALRQAISRLAPIQRKKVDLLVQAFDIVLDGHDTPKQTKNSDTPRNNDETKEGKPRVEEGCEVNKDEQKIKNVFARFQVHQKDLKGEEEVHNTPKESRNLPPIRNFKQRIVVEKGKDSRMWKLIYKHMVTEKEGIDSANAESVASVESEYDDEAGGLQIDARRSGTVTLVREALEKILSEIPDNSSDDQSMDSDITTEQELFERNSQVSEEKSEVSSATFKPKFTEKRVKGWNNVKKVILLKRFVSDLGSLTRLSPKTPRVLPWEPDPETEKIRLRHQEIGGKRNSEEWMLDYALRQAISTLAPSQKRKVSLLAQAFDTISLQDMGSGSTPGSAASSRNISRQSSISSMAAHYENEANAEIIRGKLRNLQEDLKESAKLDGVSKDLEEKQQCSSLWRILCKQMEDNEKNQTLPEETRKEEEEEELKEDTSVDGEKMELYQTEAVELLGEVIDGISLEESQDQNLNNEETRQKSETLQVSKVRIDRWSNLKRAILLRRFVKALENVRKFNPREPRFLPPNPEVEAEKVNLRHQETQNKKNGDEWMVDNALQGVVSKLTPARKLKVQLLVQAFESLSATGN.

Disordered regions lie at residues 1–31 (MSNP…RKMW), 63–112 (TAES…SRIS), 280–329 (GPLG…GRSS), and 378–414 (HDHD…EEDG). Over residues 18-31 (SSRRVHKRRERKMW) the composition is skewed to basic residues. Basic and acidic residues predominate over residues 76–86 (DDSRTYSKSSD). Over residues 98–107 (SVKRRAKSKS) the composition is skewed to basic residues. The segment covering 297–312 (DNVDGDSDEEVFEEEV) has biased composition (acidic residues). Calmodulin-binding regions lie at residues 493–592 (TFHM…SLIP) and 831–938 (NSLK…DIVL). Disordered stretches follow at residues 816–844 (IPDS…GETK) and 941–971 (HDTP…EGCE). Basic and acidic residues-rich tracts occupy residues 833–844 (LKEEKEHQGETK) and 954–971 (RNND…EGCE). The tract at residues 1135–1229 (EKRVKGWNNV…SLLAQAFDTI (95 aa)) is calmodulin-binding. 2 disordered regions span residues 1232-1252 (QDMG…ISRQ) and 1316-1340 (EKNQ…DTSV). The segment covering 1235–1252 (GSGSTPGSAASSRNISRQ) has biased composition (low complexity). A compositionally biased stretch (basic and acidic residues) spans 1316–1328 (EKNQTLPEETRKE). A calmodulin-binding region spans residues 1379 to 1483 (RQKSETLQVS…QLLVQAFESL (105 aa)).

Its function is as follows. Binds calmodulin in a calcium-dependent manner in vitro. May play a role in general plant defense including R gene-mediated responses. The polypeptide is Calmodulin binding protein PICBP (Arabidopsis thaliana (Mouse-ear cress)).